A 566-amino-acid chain; its full sequence is Type 3 secretion system secretin (566 aa).

Residues 1-22 (MKKFNIKSLTLLIVLLPLIVNA) form the signal peptide.

The protein belongs to the bacterial secretin family. T3SS SctC subfamily. In terms of assembly, the core secretion machinery of the T3SS is composed of approximately 20 different proteins, including cytoplasmic components, a base, an export apparatus and a needle. This subunit is part of the base, which anchors the injectisome in the bacterial cell envelope. Forms a stable homooligomeric complex. Interacts with the pilotin MxiM/SctG and the inner membrane ring outer protein MxiJ/SctJ.

Its subcellular location is the cell outer membrane. Its function is as follows. Component of the type III secretion system (T3SS), also called injectisome, which is used to inject bacterial effector proteins into eukaryotic host cells. Forms a ring-shaped multimeric structure with an apparent central pore in the outer membrane. Necessary for the secretion of Ipa invasins. The protein is Type 3 secretion system secretin of Shigella flexneri.